A 360-amino-acid polypeptide reads, in one-letter code: G-protein coupled receptor 15 (360 aa).

The Extracellular portion of the chain corresponds to 1–33 (MDPEETSVYLDYYYATSPNPDIRETHSHVPYTS). Residues 34–54 (VFLPVFYTAVFLTGVLGNLVL) traverse the membrane as a helical segment. Residues 55-69 (MGALHFKPGSRRLID) lie on the Cytoplasmic side of the membrane. Residues 70–90 (IFIINLAASDFIFLVTLPLWV) traverse the membrane as a helical segment. Residues 91-120 (DKEASLGLWRTGSFLCKGSSYMISVNMHCS) are Extracellular-facing. The helical transmembrane segment at 121 to 141 (VFLLTCMSVDRYLAIVCPVVS) threads the bilayer. The Cytoplasmic portion of the chain corresponds to 142-149 (RKFRRTDC). A helical membrane pass occupies residues 150–170 (AYVVCASIWFISCLLGLPTLL). The Extracellular segment spans residues 171–192 (SRELTLIDDKPYCAEKKATPLK). A helical membrane pass occupies residues 193 to 213 (LIWSLVALIFTFFVPLLSIVT). Residues 214–239 (CYCCIARKLCAHYQQSGKHNKKLKKS) are Cytoplasmic-facing. Residues 240 to 260 (IKIIFIVVAAFLVSWLPFNTF) traverse the membrane as a helical segment. Over 261–284 (KLLAIVSGLQQERYFPSAMLQLGM) the chain is Extracellular. Residues 285 to 305 (EVSGPLAFANSCVNPFIYYIF) traverse the membrane as a helical segment. Residues 306–360 (DSYIRRAIVHCLCPCLKNYDFGSSTETSDSHLTKALSTFIHAEDFTRRRKRSVSL) are Cytoplasmic-facing. Phosphoserine is present on Ser359.

Belongs to the G-protein coupled receptor 1 family. As to quaternary structure, interacts with adapter YWHAE; this interaction promotes ER-to-Golgi transport of GPR15. In terms of processing, phosphorylation is necessary for YWHAE binding and efficient surface expression. Post-translationally, O-glycosylated. Sialylated O-glycans in the N-terminal tail inhibits binding of GPR15LG. Sulfation is required for efficient binding of GPR15LG.

It localises to the cell membrane. G protein-coupled receptor that plays an important role in immune homeostasis. Acts via its natural ligand GPR15LG, a chemokine-like polypeptide strongly expressed in gastrointestinal tissues. GPR15-GPR15LG signaling axis regulates intestinal homeostasis and inflammation through the migration of immune cells. Controls thereby the specific homing of T-cells, particularly FOXP3+ regulatory T-cells (Tregs), to the large intestine lamina propria. Also required for skin localization of thymus-derived dendritic epidermal T-cells. Plays an important role in mediating cytoprotective function as well as angiogenesis of thrombomodulin. Mechanistically, preferentially signals through the Gi/o pathway to inhibit adenylate cyclase activity and activate a phosphatidylinositol-calcium second messenger system that regulates the release of Ca(2+) ions from intracellular stores. This is G-protein coupled receptor 15 (GPR15) from Macaca mulatta (Rhesus macaque).